A 293-amino-acid polypeptide reads, in one-letter code: 4-hydroxy-tetrahydrodipicolinate synthase (293 aa).

A pyruvate-binding site is contributed by Thr-45. Tyr-133 acts as the Proton donor/acceptor in catalysis. Lys-161 functions as the Schiff-base intermediate with substrate in the catalytic mechanism. Ile-203 is a binding site for pyruvate.

Belongs to the DapA family. In terms of assembly, homotetramer; dimer of dimers.

The protein resides in the cytoplasm. The enzyme catalyses L-aspartate 4-semialdehyde + pyruvate = (2S,4S)-4-hydroxy-2,3,4,5-tetrahydrodipicolinate + H2O + H(+). It participates in amino-acid biosynthesis; L-lysine biosynthesis via DAP pathway; (S)-tetrahydrodipicolinate from L-aspartate: step 3/4. Catalyzes the condensation of (S)-aspartate-beta-semialdehyde [(S)-ASA] and pyruvate to 4-hydroxy-tetrahydrodipicolinate (HTPA). This Aliivibrio salmonicida (strain LFI1238) (Vibrio salmonicida (strain LFI1238)) protein is 4-hydroxy-tetrahydrodipicolinate synthase.